The primary structure comprises 33 residues: Cyanophlyctin-beta (33 aa).

A disulfide bridge links cysteine 27 with cysteine 33.

Expressed by the skin glands.

The protein localises to the secreted. In terms of biological role, antimicrobial peptide active against E.coli (MIC=5 uM), K.pneumoniae (MIC=10 uM), B.cereus (MIC=7 uM) and S.aureus (MIC=12 uM). Has very little hemolytic activity. This Euphlyctis cyanophlyctis (Skittering frog) protein is Cyanophlyctin-beta.